Consider the following 198-residue polypeptide: DnaJ homolog subfamily C member 12 (198 aa).

Residue Met-1 is modified to N-acetylmethionine. In terms of domain architecture, J spans Asp-14–Arg-79. A compositionally biased stretch (basic and acidic residues) spans Glu-114 to Glu-156. Residues Glu-114–Phe-169 form a disordered region. A phosphoserine mark is found at Ser-160, Ser-166, and Ser-182.

In terms of assembly, interacts with HSPA8. Interacts with TPH1. Interacts with TPH2. Expressed at high levels in brain, heart, and testis, and at reduced levels in kidney and stomach.

Its subcellular location is the cytoplasm. Functionally, probable co-chaperone that participates in the proper folding of biopterin-dependent aromatic amino acid hydroxylases, which include phenylalanine-4-hydroxylase (PAH), tyrosine 3-monooxygenase (TH) and peripheral and neuronal tryptophan hydroxylases (TPH1 and TPH2). This is DnaJ homolog subfamily C member 12 (DNAJC12) from Homo sapiens (Human).